A 390-amino-acid chain; its full sequence is Mevalonate kinase (390 aa).

ATP is bound by residues lysine 16, serine 130, and 135–141; that span reads GAGLGSS. Positions 141 and 193 each coordinate Mg(2+). The active-site Proton acceptor is aspartate 204.

The protein belongs to the GHMP kinase family. Mevalonate kinase subfamily. The cofactor is Mg(2+).

The protein resides in the cytoplasm. It carries out the reaction (R)-mevalonate + ATP = (R)-5-phosphomevalonate + ADP + H(+). Its pathway is isoprenoid biosynthesis; isopentenyl diphosphate biosynthesis via mevalonate pathway; isopentenyl diphosphate from (R)-mevalonate: step 1/3. Catalyzes the phosphorylation of mevalonate to mevalonate 5-phosphate, a key step in isoprenoid biosynthesis. In Dictyostelium discoideum (Social amoeba), this protein is Mevalonate kinase.